The chain runs to 98 residues: Defensin-A (98 aa).

A signal peptide spans 1 to 18 (MKSITVICFLALCTVAIT). Residues 19 to 58 (SAYPQEPVLADEARPFANSLFDELPEETYQAAVENFRLKR) constitute a propeptide that is removed on maturation. 3 disulfide bridges follow: Cys61–Cys88, Cys74–Cys94, and Cys78–Cys96.

It belongs to the invertebrate defensin family. Type 1 subfamily.

Its subcellular location is the secreted. Antibacterial peptide mostly active against Gram-positive bacteria. Has activity against the bacteria Gram-negative E.cloacae beta12. The sequence is that of Defensin-A (DEFA) from Aedes aegypti (Yellowfever mosquito).